The following is a 322-amino-acid chain: Cytochrome f (322 aa).

Positions 1–35 (MQTRNTFSWTWIREEITRSISVSLMIYIITWSSIS) are cleaved as a signal peptide. Tyr38, Cys58, Cys61, and His62 together coordinate heme. A helical transmembrane segment spans residues 288–308 (VQGLLFFLGSVVLAQIFLVLK).

The protein belongs to the cytochrome f family. The 4 large subunits of the cytochrome b6-f complex are cytochrome b6, subunit IV (17 kDa polypeptide, petD), cytochrome f and the Rieske protein, while the 4 small subunits are PetG, PetL, PetM and PetN. The complex functions as a dimer. It depends on heme as a cofactor.

The protein localises to the plastid. It localises to the chloroplast thylakoid membrane. Component of the cytochrome b6-f complex, which mediates electron transfer between photosystem II (PSII) and photosystem I (PSI), cyclic electron flow around PSI, and state transitions. The sequence is that of Cytochrome f from Aethionema grandiflorum (Persian stone-cress).